A 408-amino-acid polypeptide reads, in one-letter code: Putative agmatinase 3 (408 aa).

A signal peptide spans Met-1 to Ala-21. The Mn(2+) site is built by His-198, Asp-222, His-224, Asp-226, Asp-319, and Asp-321.

The protein belongs to the arginase family. The cofactor is Mn(2+).

It carries out the reaction agmatine + H2O = urea + putrescine. This is Putative agmatinase 3 from Schizosaccharomyces pombe (strain 972 / ATCC 24843) (Fission yeast).